A 166-amino-acid polypeptide reads, in one-letter code: Probable glucosamine 6-phosphate N-acetyltransferase 2 (166 aa).

Residues 21 to 166 form the N-acetyltransferase domain; it reads VQIRRLEATD…EKGVQMAIYF (146 aa). Residues Ser43, 93 to 96, and 105 to 107 each bind substrate; these read KFLR and EDV. 115–120 is an acetyl-CoA binding site; sequence GRGLGL. 136-137 lines the substrate pocket; the sequence is YK. 150–152 contributes to the acetyl-CoA binding site; it reads YAK.

This sequence belongs to the acetyltransferase family. GNA1 subfamily. In terms of assembly, homodimer.

It is found in the endoplasmic reticulum membrane. It carries out the reaction D-glucosamine 6-phosphate + acetyl-CoA = N-acetyl-D-glucosamine 6-phosphate + CoA + H(+). Its pathway is nucleotide-sugar biosynthesis; UDP-N-acetyl-alpha-D-glucosamine biosynthesis; N-acetyl-alpha-D-glucosamine 1-phosphate from alpha-D-glucosamine 6-phosphate (route I): step 1/2. Functionally, acetyltransferase involved in UDP-N-acetylglucosamine (UDP-GlcNAc) biosynthesis. UDP-GlcNAc is an essential metabolite that serves as an initial sugar donor of N-glycan synthesis and thus plays an important role in protein and lipid glycosylation. The protein is Probable glucosamine 6-phosphate N-acetyltransferase 2 of Oryza sativa subsp. japonica (Rice).